The primary structure comprises 328 residues: Ketol-acid reductoisomerase (NADP(+)) (328 aa).

Residues 2–182 (AKIYTDREAS…GATRAGVIET (181 aa)) enclose the KARI N-terminal Rossmann domain. Residues 25–28 (YGIQ), R48, S53, and 83–86 (DMEQ) each bind NADP(+). The active site involves H108. G134 lines the NADP(+) pocket. The KARI C-terminal knotted domain maps to 183–328 (TFAEETETDL…EEMRKLLFGP (146 aa)). Residues D191, E195, E227, and E231 each coordinate Mg(2+). S252 is a binding site for substrate.

It belongs to the ketol-acid reductoisomerase family. Mg(2+) is required as a cofactor.

It carries out the reaction (2R)-2,3-dihydroxy-3-methylbutanoate + NADP(+) = (2S)-2-acetolactate + NADPH + H(+). It catalyses the reaction (2R,3R)-2,3-dihydroxy-3-methylpentanoate + NADP(+) = (S)-2-ethyl-2-hydroxy-3-oxobutanoate + NADPH + H(+). It functions in the pathway amino-acid biosynthesis; L-isoleucine biosynthesis; L-isoleucine from 2-oxobutanoate: step 2/4. The protein operates within amino-acid biosynthesis; L-valine biosynthesis; L-valine from pyruvate: step 2/4. Functionally, involved in the biosynthesis of branched-chain amino acids (BCAA). Catalyzes an alkyl-migration followed by a ketol-acid reduction of (S)-2-acetolactate (S2AL) to yield (R)-2,3-dihydroxy-isovalerate. In the isomerase reaction, S2AL is rearranged via a Mg-dependent methyl migration to produce 3-hydroxy-3-methyl-2-ketobutyrate (HMKB). In the reductase reaction, this 2-ketoacid undergoes a metal-dependent reduction by NADPH to yield (R)-2,3-dihydroxy-isovalerate. The sequence is that of Ketol-acid reductoisomerase (NADP(+)) from Pyrobaculum aerophilum (strain ATCC 51768 / DSM 7523 / JCM 9630 / CIP 104966 / NBRC 100827 / IM2).